Here is a 228-residue protein sequence, read N- to C-terminus: PKHD-type hydroxylase xcc-b100_1388 (228 aa).

The Fe2OG dioxygenase domain maps to 78–180; that stretch reads RIYPPLFNRY…RVASFFWIQS (103 aa). H96, D98, and H161 together coordinate Fe cation. R171 contributes to the 2-oxoglutarate binding site.

It depends on Fe(2+) as a cofactor. Requires L-ascorbate as cofactor.

The chain is PKHD-type hydroxylase xcc-b100_1388 from Xanthomonas campestris pv. campestris (strain B100).